The primary structure comprises 602 residues: Aryl hydrocarbon receptor protein 1 (602 aa).

Residues 1-2 (MY) constitute a propeptide that is removed on maturation. Over residues 1-12 (MYASKRRQRNFK) the composition is skewed to basic residues. The interval 1–28 (MYASKRRQRNFKRVRDPPKQLTNTNPSK) is disordered. 2 consecutive short sequence motifs (nuclear localization signal) follow at residues 5 to 8 (KRRQ) and 28 to 33 (KRHRER). Residues 18–71 (PKQLTNTNPSKRHRERLNGELETVAMLLPYDSSTISRLDKLSVLRLAVSFLQCK) enclose the bHLH domain. 3 required for maintaining the overall integrity of the AHR:ARNT heterodimer and its transcriptional activity regions span residues 41–73 (VAML…CKAH), 133–141 (SLKSLGGFI), and 266–268 (ICV). Positions 55–63 (LDKLSVLRL) match the Nuclear export signal motif. Residues 126 to 196 (ESNFEEISLK…QQLDSNFHIP (71 aa)) form the PAS domain. The interval 440–467 (STSNSLFPSVPVPTPTTTKANRRRKENS) is disordered.

Interacts with daf-21/hsp90. Interacts with aha-1. In terms of tissue distribution, expressed in many distinct neuronal cells including RMED, RMEV, RMEL and RMER. Functions in URX neurons to promote aggregation behavior.

It localises to the nucleus. Functionally, probable ligand-activated transcriptional activator. Acts as a transcriptional regulator in GABAergic motor neuron cell fate specification and development. Promotes cell-type-specific expression of guanylate cyclase genes that have key roles in aggregation behavior and hyperoxia avoidance. Has no role in carbon dioxide avoidance. This chain is Aryl hydrocarbon receptor protein 1, found in Caenorhabditis elegans.